Reading from the N-terminus, the 165-residue chain is Protein phosphatase 1 regulatory subunit 14C (165 aa).

A compositionally biased stretch (low complexity) spans 1–12; that stretch reads MSVATGSSETAG. The interval 1–73 is disordered; it reads MSVATGSSET…QRRHQQGKVT (73 aa). The residue at position 2 (S2) is an N-acetylserine. S25 carries the phosphoserine modification. Residue R27 is modified to Omega-N-methylarginine. A Phosphoserine modification is found at S33. The span at 35 to 63 shows a compositional bias: low complexity; sequence GSSSGSGSSREDSAPVATAAAAGQVQQQQ. The residue at position 73 (T73) is a Phosphothreonine; by ILK1.

This sequence belongs to the PP1 inhibitor family. Post-translationally, has over 600-fold higher inhibitory activity when phosphorylated, creating a molecular switch for regulating the phosphorylation status of PPP1CA substrates and smooth muscle contraction. The main inhibitory site appears to be Thr-73. As to expression, detected in breast cancer.

The protein resides in the cytoplasm. Its subcellular location is the membrane. Inhibitor of the PP1 regulatory subunit PPP1CA. This Homo sapiens (Human) protein is Protein phosphatase 1 regulatory subunit 14C (PPP1R14C).